A 68-amino-acid polypeptide reads, in one-letter code: Sperm-associated antigen 11A (68 aa).

An N-terminal signal peptide occupies residues 1–19 (MKVLLLFAVFFCLVQRNSG). Intrachain disulfides connect C30/C59, C37/C52, and C42/C60.

The protein belongs to the beta-defensin family. Only expressed in epididymis (middle part of the caput).

The protein localises to the secreted. Functionally, has antimicrobial activity against E.coli. Plays a role in the defense response in the male reproductive tract, contributing to sperm maturation, storage and protection. The chain is Sperm-associated antigen 11A from Rattus norvegicus (Rat).